The chain runs to 151 residues: Flavodoxin YqcA (151 aa).

The Flavodoxin-like domain maps to 4–145; the sequence is IGIFVGTVYG…ISCPWVEAWA (142 aa). Residues 10 to 15 and 99 to 101 each bind FMN; these read TVYGNA and NFC.

The protein belongs to the flavodoxin family. MioC subfamily. As to quaternary structure, monomer. FMN serves as cofactor.

Probable electron transporter. The chain is Flavodoxin YqcA from Pectobacterium carotovorum subsp. carotovorum (Erwinia carotovora subsp. carotovora).